The chain runs to 136 residues: Acidic phospholipase A2 EC-I (136 aa).

An N-terminal signal peptide occupies residues 1-16; it reads MKTLWIVAVWLIAVEG. 7 disulfides stabilise this stretch: C42-C129, C44-C60, C59-C111, C65-C136, C66-C104, C73-C97, and C91-C102. 3 residues coordinate Ca(2+): Y43, G45, and G47. H63 is a catalytic residue. Residue D64 coordinates Ca(2+). D105 is a catalytic residue. The segment at 112 to 133 is may be responsible for inhibition of the platelet-aggregation activity; it reads LGENVNTYDKKYKSYEDCTEEV.

This sequence belongs to the phospholipase A2 family. Group II subfamily. D49 sub-subfamily. As to quaternary structure, monomer. Ca(2+) serves as cofactor. As to expression, expressed by the venom gland.

The protein resides in the secreted. The enzyme catalyses a 1,2-diacyl-sn-glycero-3-phosphocholine + H2O = a 1-acyl-sn-glycero-3-phosphocholine + a fatty acid + H(+). Functionally, snake venom phospholipase A2 (PLA2) that inhibits human platelet aggregation induced by ADP, collagen and epinephrin (possibly by binding the platelet receptor alpha-IIb/beta-III) and induces mild edema in the foot pads of mice. PLA2 catalyzes the calcium-dependent hydrolysis of the 2-acyl groups in 3-sn-phosphoglycerides. The protein is Acidic phospholipase A2 EC-I of Echis carinatus (Saw-scaled viper).